Reading from the N-terminus, the 179-residue chain is Large ribosomal subunit protein uL5 (179 aa).

Belongs to the universal ribosomal protein uL5 family. In terms of assembly, part of the 50S ribosomal subunit; part of the 5S rRNA/L5/L18/L25 subcomplex. Contacts the 5S rRNA and the P site tRNA. Forms a bridge to the 30S subunit in the 70S ribosome.

This is one of the proteins that bind and probably mediate the attachment of the 5S RNA into the large ribosomal subunit, where it forms part of the central protuberance. In the 70S ribosome it contacts protein S13 of the 30S subunit (bridge B1b), connecting the 2 subunits; this bridge is implicated in subunit movement. Contacts the P site tRNA; the 5S rRNA and some of its associated proteins might help stabilize positioning of ribosome-bound tRNAs. The polypeptide is Large ribosomal subunit protein uL5 (Mannheimia succiniciproducens (strain KCTC 0769BP / MBEL55E)).